Consider the following 325-residue polypeptide: Aquaporin-8 (325 aa).

At 1–10 (MALRSPARDY) the chain is on the cytoplasmic side. Residues 11-31 (LVSMIGELVGTFLFLFFAFAA) traverse the membrane as a helical segment. The Extracellular segment spans residues 32-52 (AQTANQPNGTKPLTPNATDTS). Asn39 and Asn47 each carry an N-linked (GlcNAc...) asparagine glycan. Residues 53-73 (KLLYIALAFGASLAANVWVFF) form a helical membrane-spanning segment. Residues 74-100 (RVSGGQFNPAVTLALVLIRAVSPTKAL) are Cytoplasmic-facing. Residues 81–83 (NPA) carry the NPA 1 motif. A helical membrane pass occupies residues 101 to 121 (ILIPAQLVGGSLAAAAVKGII). The Extracellular portion of the chain corresponds to 122–140 (PGDDILFAVSLGPGVANVQ). Residues 141–161 (GLFIELLLTFMLVFTILMLVA) traverse the membrane as a helical segment. Topologically, residues 162-167 (EKTKST) are cytoplasmic. Residues 168–188 (FVAPIGIGFSLFIGHLVGIFW) form a helical membrane-spanning segment. Topologically, residues 189–212 (TGAGINPARAFSPALIQASFPSYH) are extracellular. The short motif at 194-196 (NPA) is the NPA 2 element. A helical transmembrane segment spans residues 213–233 (WIYWLGPALGSFLAAGLYLGL). The Cytoplasmic portion of the chain corresponds to 234–325 (KEMKYELVGG…GSPDSTDLPT (92 aa)). Disordered regions lie at residues 279–298 (LGQF…LERG) and 305–325 (EDDP…DLPT). The segment covering 286–298 (TEGHRSPVDLERG) has biased composition (basic and acidic residues).

It belongs to the MIP/aquaporin (TC 1.A.8) family.

The protein resides in the cell membrane. The catalysed reaction is H2O2(out) = H2O2(in). The enzyme catalyses H2O(in) = H2O(out). Its function is as follows. Plasma membrane water channel that regulates the reactive oxygen species (ROS)-signaling pathway through its capacity to act as a membrane channel for hydrogen peroxide uptake. Required for the formation of infection structures and infection, especially on host leaves where it is essential for the penetration into the host. Regulates the expression of proteins related to redox-regulation and intracellular signal transduction and plays a role in the distribution of mitochondria in the hyphae. This chain is Aquaporin-8, found in Botryotinia fuckeliana (strain B05.10) (Noble rot fungus).